Here is a 416-residue protein sequence, read N- to C-terminus: Tumor necrosis factor receptor superfamily member 16 (416 aa).

A signal peptide spans 1 to 19 (MAGFVPLLLLLLPAGPTWG). 4 TNFR-Cys repeats span residues 23–57 (KCLTKMYTTSGECCKACNLGEGVVQPCGVNQTVCE), 58–99 (PCLD…DAVC), 100–138 (RCAYGYFQDELSGSCKECSICEVGFGLMFPCRDSQDTVC), and 140–180 (ECPE…DAEC). Disulfide bonds link Cys24/Cys35, Cys36/Cys49, Cys39/Cys56, Cys59/Cys75, Cys78/Cys91, Cys81/Cys99, Cys101/Cys114, Cys117/Cys130, Cys120/Cys138, Cys141/Cys156, Cys159/Cys172, and Cys162/Cys180. Topologically, residues 29-239 (YTTSGECCKA…PVVSRGTADN (211 aa)) are extracellular. N-linked (GlcNAc...) asparagine glycosylation occurs at Asn52. Residues 240-261 (LIPVYCSILAAVVVGLVAYIAF) form a helical membrane-spanning segment. Residues 262–416 (KRWNSCKQNK…YSESTATSPV (155 aa)) are Cytoplasmic-facing. 2 stretches are compositionally biased toward polar residues: residues 270 to 284 (NKQGANNRPVNQTPS) and 294 to 315 (SGISVDSQSLHDQQPPNQSTQG). The segment at 270 to 328 (NKQGANNRPVNQTPSPEGEKLHSDSGISVDSQSLHDQQPPNQSTQGPAPKGDGSLYASL) is disordered. The region spanning 333 to 410 (QEEVEKLLSS…DIAESLYSES (78 aa)) is the Death domain.

Homodimer; disulfide-linked. Heterodimer with SORCS2. The extracellular domains of the heterodimer bind NGF. N- and O-glycosylated. In terms of processing, phosphorylated on serine residues. As to expression, detected in embryonic dorsal root ganglion and retina.

The protein resides in the cell membrane. The protein localises to the perikaryon. It localises to the cell projection. Its subcellular location is the growth cone. It is found in the dendritic spine. Low affinity receptor which can bind to NGF, BDNF, NTF3, and NTF4. Forms a heterodimeric receptor with SORCS2 that binds the precursor forms of NGF, BDNF and NTF3 with high affinity, and has much lower affinity for mature NGF and BDNF. Plays an important role in differentiation and survival of specific neuronal populations during development. Can mediate cell survival as well as cell death of neural cells. Plays a role in the inactivation of RHOA. Necessary for the circadian oscillation of clock genes in the suprachiasmatic nucleus (SCmgetaN) of the brain and in liver and of the genes involved in glucose and lipid metabolism in the liver. The chain is Tumor necrosis factor receptor superfamily member 16 (NGFR) from Gallus gallus (Chicken).